The following is a 579-amino-acid chain: V-type ATP synthase alpha chain (579 aa).

Position 227-234 (227-234 (GGFGTGKT)) interacts with ATP.

It belongs to the ATPase alpha/beta chains family.

It carries out the reaction ATP + H2O + 4 H(+)(in) = ADP + phosphate + 5 H(+)(out). In terms of biological role, produces ATP from ADP in the presence of a proton gradient across the membrane. The V-type alpha chain is a catalytic subunit. The chain is V-type ATP synthase alpha chain from Anaeromyxobacter dehalogenans (strain 2CP-C).